We begin with the raw amino-acid sequence, 209 residues long: Protein Bel-1 (209 aa).

3 disordered regions span residues 1-30 (MASK…LDLT), 123-143 (FLNS…PATS), and 156-185 (CSRP…GESG). 2 stretches are compositionally biased toward polar residues: residues 21 to 30 (SHSTSGLDLT) and 132 to 143 (TPKTDPTRPATS).

Transcriptional transactivator that activates the viral internal promoter (IP), thereby enhancing its own expression. This transactivation is repressed by nuclear factor I. Also transactivates the long terminal repeat (LTR) promoter, thereby inducing structural gene expression, initiating the late phase of infection. It is therefore a key regulator of viral gene expression. It directly binds to and activates DNA target sites of viral promoters and those of distinct cellular genes. Required for viral replication. This is Protein Bel-1 (bel1) from Felis catus (Cat).